A 313-amino-acid polypeptide reads, in one-letter code: GTP cyclohydrolase 1 (313 aa).

A compositionally biased stretch (basic and acidic residues) spans 1-10 (MAQETTRDGS). The interval 1–120 (MAQETTRDGS…SRGTRERLEE (120 aa)) is disordered. Over residues 11-20 (DSPSGSVSPP) the composition is skewed to low complexity. Residues 29 to 39 (KDKKSSKKRAH) show a composition bias toward basic residues. Residues 40-64 (SSGERRSSVSKPARDPSDKPEESPS) show a composition bias toward basic and acidic residues. Low complexity predominate over residues 72-102 (TSSTAAAAVPSTITEEVSPSTSVTRSPSPVI). 3 residues coordinate Zn(2+): cysteine 202, histidine 205, and cysteine 273.

Belongs to the GTP cyclohydrolase I family. Toroid-shaped homodecamer, composed of two pentamers of five dimers.

The catalysed reaction is GTP + H2O = 7,8-dihydroneopterin 3'-triphosphate + formate + H(+). It functions in the pathway cofactor biosynthesis; 7,8-dihydroneopterin triphosphate biosynthesis; 7,8-dihydroneopterin triphosphate from GTP: step 1/1. Its activity is regulated as follows. GTP shows a positive allosteric effect, and tetrahydrobiopterin inhibits the enzyme activity. Functionally, GTP cyclohydrolase 1 is the first enzyme in the biosynthetic pathway leading to folic acid. The polypeptide is GTP cyclohydrolase 1 (gch-1) (Neurospora crassa (strain ATCC 24698 / 74-OR23-1A / CBS 708.71 / DSM 1257 / FGSC 987)).